The primary structure comprises 235 residues: U1 small nuclear ribonucleoprotein C (235 aa).

The segment at 4–36 adopts a Matrin-type zinc-finger fold; the sequence is YYCEYCDIYLTHSSPVGRRQHIHGRKHISAKIE. The segment at 131–235 is disordered; it reads QAHNNYSYPN…SKEHIESDIS (105 aa). Residues 134–168 are compositionally biased toward low complexity; that stretch reads NNYSYPNSINPSNQINYSNNYGSNNFNNSNEFNKN. Over residues 169 to 189 the composition is skewed to basic and acidic residues; it reads MNEKDNINNNDIHDNKVKTDE. Residues 192 to 203 are compositionally biased toward low complexity; it reads PINNDNLNNTRN. 2 stretches are compositionally biased toward basic and acidic residues: residues 205–217 and 225–235; these read SYEENHYSTDHKK and NSKEHIESDIS.

This sequence belongs to the U1 small nuclear ribonucleoprotein C family. In terms of assembly, U1 snRNP is composed of the 7 core Sm proteins B/B', D1, D2, D3, E, F and G that assemble in a heptameric protein ring on the Sm site of the small nuclear RNA to form the core snRNP, and at least 3 U1 snRNP-specific proteins U1-70K, U1-A and U1-C. U1-C interacts with U1 snRNA and the 5' splice-site region of the pre-mRNA.

Its subcellular location is the nucleus. Functionally, component of the spliceosomal U1 snRNP, which is essential for recognition of the pre-mRNA 5' splice-site and the subsequent assembly of the spliceosome. U1-C is directly involved in initial 5' splice-site recognition for both constitutive and regulated alternative splicing. The interaction with the 5' splice-site seems to precede base-pairing between the pre-mRNA and the U1 snRNA. Stimulates commitment or early (E) complex formation by stabilizing the base pairing of the 5' end of the U1 snRNA and the 5' splice-site region. This Plasmodium falciparum (isolate 3D7) protein is U1 small nuclear ribonucleoprotein C.